The chain runs to 597 residues: FERM domain-containing protein 3 (597 aa).

In terms of domain architecture, FERM spans 32–312 (MRCTIRLLDD…ENQAFYKYAK (281 aa)). The interval 409–435 (SAPLISSSPVKAAQEYEDPPSEEEDKI) is disordered. Positions 423–432 (EYEDPPSEEE) are enriched in acidic residues. Residues 531–551 (LLVVGLGLLLFVFPLLLLLLE) traverse the membrane as a helical segment.

The protein localises to the membrane. In terms of biological role, putative tumor suppressor gene that may be implicated in the origin and progression of lung cancer. This chain is FERM domain-containing protein 3 (FRMD3), found in Pongo abelii (Sumatran orangutan).